A 468-amino-acid chain; its full sequence is Ribulose bisphosphate carboxylase large chain (468 aa).

An N6,N6,N6-trimethyllysine modification is found at K5. Residues N114 and T164 each coordinate substrate. The Proton acceptor role is filled by K166. Substrate is bound at residue K168. Mg(2+)-binding residues include K192, D194, and E195. N6-carboxylysine is present on K192. H285 acts as the Proton acceptor in catalysis. The substrate site is built by R286, H318, and S370.

The protein belongs to the RuBisCO large chain family. Type I subfamily. Heterohexadecamer of 8 large chains and 8 small chains; disulfide-linked. The disulfide link is formed within the large subunit homodimers. Requires Mg(2+) as cofactor. In terms of processing, the disulfide bond which can form in the large chain dimeric partners within the hexadecamer appears to be associated with oxidative stress and protein turnover.

The protein resides in the plastid. It localises to the chloroplast. It carries out the reaction 2 (2R)-3-phosphoglycerate + 2 H(+) = D-ribulose 1,5-bisphosphate + CO2 + H2O. The enzyme catalyses D-ribulose 1,5-bisphosphate + O2 = 2-phosphoglycolate + (2R)-3-phosphoglycerate + 2 H(+). In terms of biological role, ruBisCO catalyzes two reactions: the carboxylation of D-ribulose 1,5-bisphosphate, the primary event in carbon dioxide fixation, as well as the oxidative fragmentation of the pentose substrate in the photorespiration process. Both reactions occur simultaneously and in competition at the same active site. The protein is Ribulose bisphosphate carboxylase large chain of Anthospermum herbaceum.